Consider the following 296-residue polypeptide: Developmental pluripotency-associated protein 4 (296 aa).

The span at 1-13 (METAGDKKWSAEE) shows a compositional bias: basic and acidic residues. Positions 1–73 (METAGDKKWS…QTRRKVPIPP (73 aa)) are disordered. Positions 23–34 (SSQPSTAPAKAK) are enriched in low complexity. The segment covering 42–58 (KSETDNGCKPKEGKPQD) has biased composition (basic and acidic residues).

In terms of assembly, interacts with DPPA2. Interacts with PCGF1. In terms of tissue distribution, expressed in pluripotent embryonic cells, but not in differentiated somatic tissues.

It localises to the nucleus. Functionally, may be involved in the maintenance of active epigenetic status of target genes. May inhibit differentiation of embryonic stem (ES) cells into a primitive ectoderm lineage. In Mus musculus (Mouse), this protein is Developmental pluripotency-associated protein 4 (Dppa4).